The following is a 202-amino-acid chain: Probable septum site-determining protein MinC (202 aa).

It belongs to the MinC family. Interacts with MinD and FtsZ.

Its function is as follows. Cell division inhibitor that blocks the formation of polar Z ring septums. Rapidly oscillates between the poles of the cell to destabilize FtsZ filaments that have formed before they mature into polar Z rings. Prevents FtsZ polymerization. The sequence is that of Probable septum site-determining protein MinC from Sulfurihydrogenibium sp. (strain YO3AOP1).